A 1263-amino-acid polypeptide reads, in one-letter code: DNA polymerase II large subunit (1263 aa).

A disordered region spans residues 1224-1250 (LENFNSSGNNGKKIEKKEKKAKEKPKK). Positions 1235–1244 (KKIEKKEKKA) are enriched in basic and acidic residues.

The protein belongs to the archaeal DNA polymerase II family. As to quaternary structure, heterodimer of a large subunit and a small subunit.

The enzyme catalyses DNA(n) + a 2'-deoxyribonucleoside 5'-triphosphate = DNA(n+1) + diphosphate. It carries out the reaction Exonucleolytic cleavage in the 3'- to 5'-direction to yield nucleoside 5'-phosphates.. Possesses two activities: a DNA synthesis (polymerase) and an exonucleolytic activity that degrades single-stranded DNA in the 3'- to 5'-direction. Has a template-primer preference which is characteristic of a replicative DNA polymerase. This is DNA polymerase II large subunit (polC) from Pyrococcus furiosus (strain ATCC 43587 / DSM 3638 / JCM 8422 / Vc1).